The following is a 268-amino-acid chain: Chymotrypsin-C (268 aa).

The first 16 residues, 1–16, serve as a signal peptide directing secretion; it reads MLGITVLAAILACASS. Residues 17–29 constitute a propeptide, activation peptide; the sequence is CGDPTFPPNLSAR. 5 cysteine pairs are disulfide-bonded: Cys-17-Cys-141, Cys-59-Cys-75, Cys-155-Cys-222, Cys-186-Cys-202, and Cys-212-Cys-243. Asn-25 carries N-linked (GlcNAc...) asparagine glycosylation. The region spanning 30–267 is the Peptidase S1 domain; the sequence is VVGGEDAVPN…YIDWIKEKIQ (238 aa). His-74 (charge relay system) is an active-site residue. 2 N-linked (GlcNAc...) asparagine glycosylation sites follow: Asn-79 and Asn-90. The Charge relay system role is filled by Asp-121. N-linked (GlcNAc...) asparagine glycosylation is present at Asn-182. The active-site Charge relay system is Ser-216.

Belongs to the peptidase S1 family. Elastase subfamily.

The catalysed reaction is Preferential cleavage: Leu-|-Xaa, Tyr-|-Xaa, Phe-|-Xaa, Met-|-Xaa, Trp-|-Xaa, Gln-|-Xaa, Asn-|-Xaa.. Its function is as follows. Regulates activation and degradation of trypsinogens and procarboxypeptidases by targeting specific cleavage sites within their zymogen precursors. Has chymotrypsin-type protease activity and hypocalcemic activity. Cleaves TRY4 and TRY5 and thereby inhibits their autoactivation. This chain is Chymotrypsin-C (Ctrc), found in Mus musculus (Mouse).